The primary structure comprises 199 residues: Glycerol-3-phosphate acyltransferase (199 aa).

5 helical membrane-spanning segments follow: residues L4 to G24, W51 to G71, E77 to L97, V111 to V131, and L152 to I172.

Belongs to the PlsY family. As to quaternary structure, probably interacts with PlsX.

It localises to the cell membrane. The enzyme catalyses an acyl phosphate + sn-glycerol 3-phosphate = a 1-acyl-sn-glycero-3-phosphate + phosphate. The protein operates within lipid metabolism; phospholipid metabolism. In terms of biological role, catalyzes the transfer of an acyl group from acyl-phosphate (acyl-PO(4)) to glycerol-3-phosphate (G3P) to form lysophosphatidic acid (LPA). This enzyme utilizes acyl-phosphate as fatty acyl donor, but not acyl-CoA or acyl-ACP. The polypeptide is Glycerol-3-phosphate acyltransferase (Symbiobacterium thermophilum (strain DSM 24528 / JCM 14929 / IAM 14863 / T)).